The chain runs to 350 residues: UDP-3-O-acylglucosamine N-acyltransferase (350 aa).

Residue histidine 248 is the Proton acceptor of the active site.

This sequence belongs to the transferase hexapeptide repeat family. LpxD subfamily. In terms of assembly, homotrimer.

The catalysed reaction is a UDP-3-O-[(3R)-3-hydroxyacyl]-alpha-D-glucosamine + a (3R)-hydroxyacyl-[ACP] = a UDP-2-N,3-O-bis[(3R)-3-hydroxyacyl]-alpha-D-glucosamine + holo-[ACP] + H(+). The protein operates within bacterial outer membrane biogenesis; LPS lipid A biosynthesis. Catalyzes the N-acylation of UDP-3-O-acylglucosamine using 3-hydroxyacyl-ACP as the acyl donor. Is involved in the biosynthesis of lipid A, a phosphorylated glycolipid that anchors the lipopolysaccharide to the outer membrane of the cell. This is UDP-3-O-acylglucosamine N-acyltransferase from Nostoc punctiforme (strain ATCC 29133 / PCC 73102).